The sequence spans 257 residues: Trans-aconitate 2-methyltransferase (257 aa).

Belongs to the methyltransferase superfamily. Tam family.

It is found in the cytoplasm. The enzyme catalyses trans-aconitate + S-adenosyl-L-methionine = (E)-3-(methoxycarbonyl)pent-2-enedioate + S-adenosyl-L-homocysteine. Functionally, catalyzes the S-adenosylmethionine monomethyl esterification of trans-aconitate. This Rhizobium meliloti (strain 1021) (Ensifer meliloti) protein is Trans-aconitate 2-methyltransferase.